The following is a 378-amino-acid chain: UDP-N-acetylglucosamine--N-acetylmuramyl-(pentapeptide) pyrophosphoryl-undecaprenol N-acetylglucosamine transferase (378 aa).

UDP-N-acetyl-alpha-D-glucosamine is bound by residues 14–16 (TGG), asparagine 125, arginine 165, serine 193, and glutamine 293.

The protein belongs to the glycosyltransferase 28 family. MurG subfamily.

The protein resides in the cell inner membrane. It catalyses the reaction di-trans,octa-cis-undecaprenyl diphospho-N-acetyl-alpha-D-muramoyl-L-alanyl-D-glutamyl-meso-2,6-diaminopimeloyl-D-alanyl-D-alanine + UDP-N-acetyl-alpha-D-glucosamine = di-trans,octa-cis-undecaprenyl diphospho-[N-acetyl-alpha-D-glucosaminyl-(1-&gt;4)]-N-acetyl-alpha-D-muramoyl-L-alanyl-D-glutamyl-meso-2,6-diaminopimeloyl-D-alanyl-D-alanine + UDP + H(+). The protein operates within cell wall biogenesis; peptidoglycan biosynthesis. Its function is as follows. Cell wall formation. Catalyzes the transfer of a GlcNAc subunit on undecaprenyl-pyrophosphoryl-MurNAc-pentapeptide (lipid intermediate I) to form undecaprenyl-pyrophosphoryl-MurNAc-(pentapeptide)GlcNAc (lipid intermediate II). This is UDP-N-acetylglucosamine--N-acetylmuramyl-(pentapeptide) pyrophosphoryl-undecaprenol N-acetylglucosamine transferase from Bartonella quintana (strain Toulouse) (Rochalimaea quintana).